Here is a 453-residue protein sequence, read N- to C-terminus: MTIHPQNHDLPTGSAMKATPFEALDLVFHFEDQAQRQWWKQAGPVLGQHLLLANYDINKQYQYLCFFGHHIIPILGPGPGSGYDYHPLEISQNFQRSGSTIRLGFQPRAYSSCVSPQDPFGELSTEEAMARLGQVTGVELDLQPYHLLASHLNLTKKEEKEMLQPTCYNSLSPSFKTQGLLAVELPRTGSITLKGYWFLSAKSMVTKTPISELSFQAFRNIDHGKDLLVPALRPIEEYFAEMKMKPANPTTPQTTEFATVACDHVDMSRTRFKLYLYECLWKYDRLADIYTLGGRLKNAPGIAEGLELLREIWSILQIPEGYHFASLQNSLLRKSTNAESCGEASKPASEEREFFDDQALIFNFEIRPGEKWPQPKVYFPLAYLTDSKAADAVVALFEKLGWKEEARRYKDNLKTYYPRCDLDKTSGLQHVLSFSYRPKTGPYTTVYYWKIGA.

Glu89 serves as a coordination point for substrate. The dimethylallyl diphosphate site is built by Arg102, Lys194, Tyr196, Lys273, Tyr275, Tyr378, Tyr443, and Tyr447.

This sequence belongs to the tryptophan dimethylallyltransferase family.

The catalysed reaction is verruculogen + dimethylallyl diphosphate = fumitremorgin A + diphosphate. The protein operates within mycotoxin biosynthesis. In terms of biological role, verruculogen prenyltransferase; part of the gene cluster that mediates the biosynthesis of fumitremorgins, indole alkaloids that carry not only intriguing chemical structures, but also interesting biological and pharmacological activities. The biosynthesis of fumitremorgin-type alkaloids begins by condensation of the two amino acids L-tryptophan and L-proline to brevianamide F, catalyzed by the non-ribosomal peptide synthetase ftmPS/ftmA. Brevianamide F is then prenylated by the prenyltransferase ftmPT1/ftmB in the presence of dimethylallyl diphosphate, resulting in the formation of tryprostatin B. The three cytochrome P450 monooxygenases, ftmP450-1/ftmC, ftmP450-2/ftmE and ftmP450-3/FtmG, are responsible for the conversion of tryprostatin B to 6-hydroxytryprostatin B, tryprostatin A to fumitremorgin C and fumitremorgin C to 12,13-dihydroxyfumitremorgin C, respectively. The putative methyltransferase ftmMT/ftmD is expected for the conversion of 6-hydroxytryprostatin B to tryprostatin A. FtmPT2/FtmH catalyzes the prenylation of 12,13-dihydroxyfumitre-morgin C in the presence of dimethylallyl diphosphate, resulting in the formation of fumitremorgin B. Fumitremorgin B is further converted to verruculogen by ftmOx1/ftmF via the insertion of an endoperoxide bond between the two prenyl moieties. Finally, verruculogen is further converted to fumitremorgin A by the verruculogen prenyltransferase ftmPT3. The sequence is that of Verruculogen prenyltransferase from Neosartorya fischeri (strain ATCC 1020 / DSM 3700 / CBS 544.65 / FGSC A1164 / JCM 1740 / NRRL 181 / WB 181) (Aspergillus fischerianus).